The following is a 440-amino-acid chain: Gamma-aminobutyric acid receptor subunit pi (440 aa).

The signal sequence occupies residues 1–23 (MSYSLYLAFLCLSLLTQRTCIQG). Residues 24 to 241 (NQVNVEVSRS…LVLQFELRRN (218 aa)) are Extracellular-facing. 3 N-linked (GlcNAc...) asparagine glycosylation sites follow: N43, N102, and N145. A disulfide bond links C160 and C174. N-linked (GlcNAc...) asparagine glycosylation is found at N196 and N228. Residues 242–262 (VLYFILETYVPSTFLVVLSWV) form a helical membrane-spanning segment. Topologically, residues 263-270 (SFWISLDS) are cytoplasmic. Residues 271 to 290 (VPARTCIGVTTVLSMTTLMI) form a helical membrane-spanning segment. Residues 291–301 (GSRTSLPNTNC) lie on the Extracellular side of the membrane. Residues 302 to 322 (FIKAIDVYLGICFSFVFGALL) form a helical membrane-spanning segment. At 323–419 (EYAVAHYSSL…NPSNVDRYSK (97 aa)) the chain is on the cytoplasmic side. A helical transmembrane segment spans residues 420–440 (LLFPLIFMLANVFYWAYYMYF).

The protein belongs to the ligand-gated ion channel (TC 1.A.9) family. Gamma-aminobutyric acid receptor (TC 1.A.9.5) subfamily. GABRP sub-subfamily. In terms of assembly, heteropentamer, formed by a combination of alpha (GABRA1-6), beta (GABRB1-3), gamma (GABRG1-3), delta (GABRD), epsilon (GABRE), rho (GABRR1-3), pi (GABRP) and theta (GABRQ) chains, each subunit exhibiting distinct physiological and pharmacological properties.

It localises to the cell membrane. The protein localises to the apical cell membrane. The catalysed reaction is chloride(in) = chloride(out). Its function is as follows. Pi subunit of the heteropentameric ligand-gated chloride channel gated by gamma-aminobutyric acid (GABA). GABA-gated chloride channels, also named GABA(A) receptors (GABAAR), consist of five subunits arranged around a central pore and contain GABA active binding site(s) located at the alpha and beta subunit interfaces. When activated by GABA, GABAARs selectively allow the flow of chloride anions across the cell membrane down their electrochemical gradient. Pi-containing GABAARs are mostly located in peripheral tissues. In the uterus, pi subunits modulate uterus contraction by altering the sensitivity of GABAARs to pregnanolone. In the lungs, pi-containing GABAARs contribute to pulmonary fluid transport via luminal secretion of chloride. This is Gamma-aminobutyric acid receptor subunit pi from Mus musculus (Mouse).